The primary structure comprises 154 residues: MKCPFCAHPDTRVADSRLMEERNAVRRRRHCPNCGKRFGTLETAELKMPAVIGPDKKRSPFNAQRLRNDLTAAARKSALTPEQIDETVRLTEHRLYTSGQRDIPSAALADMVLKELLRQDTEAAVRFAALHKRFDNPADFASWLAQAVKTGGKA.

A zinc finger lies at 3–34 (CPFCAHPDTRVADSRLMEERNAVRRRRHCPNC). The 91-residue stretch at 49-139 (PAVIGPDKKR…LHKRFDNPAD (91 aa)) folds into the ATP-cone domain.

Belongs to the NrdR family. It depends on Zn(2+) as a cofactor.

Functionally, negatively regulates transcription of bacterial ribonucleotide reductase nrd genes and operons by binding to NrdR-boxes. This chain is Transcriptional repressor NrdR, found in Neisseria meningitidis serogroup B (strain ATCC BAA-335 / MC58).